The sequence spans 199 residues: Adult-specific cuticular protein ACP-22 (199 aa).

The signal sequence occupies residues 1-19; sequence MRLFIILSVASFGAIGVLS. The disordered stretch occupies residues 63-103; that stretch reads GGGGGGGGEGEEGREHELRGGGLELGGGGGGGGGGGGGGGE. The span at 82-102 shows a compositional bias: gly residues; that stretch reads GGGLELGGGGGGGGGGGGGGG. One can recognise a Chitin-binding type R&amp;R domain in the interval 133 to 199; the sequence is HPEYHSDYHV…IARVSYRKHH (67 aa).

Epidermal regions synthesizing hard cuticle.

Its function is as follows. Cuticular proteins play a significant role in determining the physical properties of cuticles. The protein is Adult-specific cuticular protein ACP-22 (ACP22) of Tenebrio molitor (Yellow mealworm beetle).